The sequence spans 516 residues: MQRSKQETRKSQYKKSIDSDESRRKREEASLSIRKNKREESLLKKRTQAVPGSTPVKVDSLINQRLEQLPSLVAEINSENPDLILKSTTAFRKLLSIEKSPPIEEVIKTGIVPRLVKFLYMQDFPQLQFEAAWALTNIASGTPEQTRVVIENGAIQVFVLLLSSPHDDVREQAVWALGNIAGDSHYCRDLVLSHNALPPLLSLLQNPAAIKVSMVRNATWTLSNFCRGKPQPPFEIVRASLPVLAKLIYYQDEEVLIDACWALSYLSDGSNERIQEVIDAKVCRKMVELLGHPTIAVQTPALRTIGNIVTGDDNQTQIVLSVQALSHLLNLLQSPKRAIRKEACWTISNITAGDKNQIQQVIDANIIPSLVYLLANAEFEIQKEAAWAISNATSCGTPQQIHFLVSQGCVKPLCDLLKVSDPRIINVALEGIENILVAGKKEAQVTGVNPYKKIIEDADGLGKIYDLQHHMNKDTFEKVSRIISTYLEDEQEDEGDLMPEGSSFSFSNQTNSNFNL.

The span at 1-29 (MQRSKQETRKSQYKKSIDSDESRRKREEA) shows a compositional bias: basic and acidic residues. The tract at residues 1-54 (MQRSKQETRKSQYKKSIDSDESRRKREEASLSIRKNKREESLLKKRTQAVPGST) is disordered. The region spanning 1-55 (MQRSKQETRKSQYKKSIDSDESRRKREEASLSIRKNKREESLLKKRTQAVPGSTP) is the IBB domain. 9 ARM repeats span residues 55 to 96 (PVKV…KLLS), 100 to 140 (SPPI…NIAS), 143 to 182 (PEQT…NIAG), 185 to 227 (HYCR…NFCR), 229 to 268 (KPQP…YLSD), 271 to 310 (NERI…NIVT), 313 to 352 (DNQT…NITA), 355 to 394 (KNQI…NATS), and 398 to 437 (PQQI…NILV). A disordered region spans residues 490–516 (EQEDEGDLMPEGSSFSFSNQTNSNFNL). Low complexity predominate over residues 502–516 (SSFSFSNQTNSNFNL).

The protein belongs to the importin alpha family. As to quaternary structure, forms a complex with tnpo/importin subunit beta.

It localises to the cytoplasm. The protein resides in the nucleus envelope. Functions in nuclear protein import via a substrate-importin alpha-beta transport complex that passes though the nuclear pore complexes (NPC). Binds specifically and directly to substrates containing either a simple or bipartite NLS motif. This is Importin subunit alpha-B from Dictyostelium discoideum (Social amoeba).